Reading from the N-terminus, the 530-residue chain is ATP-dependent RNA helicase DBP3 (530 aa).

The segment covering 1–20 (MSKDEIKDKKRKSEEYEVVD) has biased composition (basic and acidic residues). Positions 1–77 (MSKDEIKDKK…VASVSTSSTV (77 aa)) are disordered. Residues 19–58 (VDKKKHKKDKKDKKEKKDKKEKKLKKDKKDKKDKKETKSE) adopt a coiled-coil conformation. Over residues 21–50 (KKKHKKDKKDKKEKKDKKEKKLKKDKKDKK) the composition is skewed to basic residues. The span at 67–77 (SVASVSTSSTV) shows a compositional bias: low complexity. The Q motif signature appears at 117-143 (LSFSHISLDSRIQAEISKFPKPTPIQA). Positions 146–322 (WPYLLAGKDV…STFMNSPIKV (177 aa)) constitute a Helicase ATP-binding domain. Residue 159-166 (AETGSGKT) participates in ATP binding. The DEAD box motif lies at 269-272 (DEAD). The region spanning 351 to 500 (KLLELLKKYQ…PVPEELKKFG (150 aa)) is the Helicase C-terminal domain.

It belongs to the DEAD box helicase family. DDX5/DBP2 subfamily.

The protein resides in the nucleus. It is found in the nucleolus. It carries out the reaction ATP + H2O = ADP + phosphate + H(+). ATP-dependent RNA helicase required for 60S ribosomal subunit synthesis. Involved in efficient pre-rRNA processing, predominantly at site A3, which is necessary for the normal formation of 25S and 5.8S rRNAs. This Vanderwaltozyma polyspora (strain ATCC 22028 / DSM 70294 / BCRC 21397 / CBS 2163 / NBRC 10782 / NRRL Y-8283 / UCD 57-17) (Kluyveromyces polysporus) protein is ATP-dependent RNA helicase DBP3 (DBP3).